We begin with the raw amino-acid sequence, 171 residues long: Co-chaperone protein HscB (171 aa).

A J domain is found at 2 to 74 (DYFTLFGLPA…LMRAEYLLSL (73 aa)).

It belongs to the HscB family. Interacts with HscA and stimulates its ATPase activity. Interacts with IscU.

Its function is as follows. Co-chaperone involved in the maturation of iron-sulfur cluster-containing proteins. Seems to help targeting proteins to be folded toward HscA. The chain is Co-chaperone protein HscB from Shigella flexneri serotype 5b (strain 8401).